A 446-amino-acid polypeptide reads, in one-letter code: Signal recognition particle 54 kDa protein (446 aa).

GTP-binding positions include 104–111, 184–188, and 242–245; these read GLQGSGKT, DTAGR, and TKMD.

This sequence belongs to the GTP-binding SRP family. SRP54 subfamily. As to quaternary structure, part of the signal recognition particle protein translocation system, which is composed of SRP and FtsY. Archaeal SRP consists of a 7S RNA molecule of 300 nucleotides and two protein subunits: SRP54 and SRP19.

Its subcellular location is the cytoplasm. It carries out the reaction GTP + H2O = GDP + phosphate + H(+). In terms of biological role, involved in targeting and insertion of nascent membrane proteins into the cytoplasmic membrane. Binds to the hydrophobic signal sequence of the ribosome-nascent chain (RNC) as it emerges from the ribosomes. The SRP-RNC complex is then targeted to the cytoplasmic membrane where it interacts with the SRP receptor FtsY. The sequence is that of Signal recognition particle 54 kDa protein from Methanocorpusculum labreanum (strain ATCC 43576 / DSM 4855 / Z).